Consider the following 349-residue polypeptide: ATP phosphoribosyltransferase regulatory subunit (349 aa).

A disordered region spans residues 325-349; sequence ANGRGRGVRPRRASARGGRAGTRPR. A compositionally biased stretch (low complexity) spans 339–349; sequence ARGGRAGTRPR.

This sequence belongs to the class-II aminoacyl-tRNA synthetase family. HisZ subfamily. As to quaternary structure, heteromultimer composed of HisG and HisZ subunits.

Its subcellular location is the cytoplasm. It functions in the pathway amino-acid biosynthesis; L-histidine biosynthesis; L-histidine from 5-phospho-alpha-D-ribose 1-diphosphate: step 1/9. Its function is as follows. Required for the first step of histidine biosynthesis. May allow the feedback regulation of ATP phosphoribosyltransferase activity by histidine. This Anaeromyxobacter dehalogenans (strain 2CP-C) protein is ATP phosphoribosyltransferase regulatory subunit.